We begin with the raw amino-acid sequence, 208 residues long: ATP synthase subunit b 1 (208 aa).

Residues 1-18 (MFVSTAFAQTATESQPAS) are compositionally biased toward polar residues. The interval 1–26 (MFVSTAFAQTATESQPASTAGEHGAA) is disordered. A helical membrane pass occupies residues 56–78 (SQVLWLAITFGLFYLFLSRVVLP).

Belongs to the ATPase B chain family. F-type ATPases have 2 components, F(1) - the catalytic core - and F(0) - the membrane proton channel. F(1) has five subunits: alpha(3), beta(3), gamma(1), delta(1), epsilon(1). F(0) has three main subunits: a(1), b(2) and c(10-14). The alpha and beta chains form an alternating ring which encloses part of the gamma chain. F(1) is attached to F(0) by a central stalk formed by the gamma and epsilon chains, while a peripheral stalk is formed by the delta and b chains.

It localises to the cell inner membrane. Functionally, f(1)F(0) ATP synthase produces ATP from ADP in the presence of a proton or sodium gradient. F-type ATPases consist of two structural domains, F(1) containing the extramembraneous catalytic core and F(0) containing the membrane proton channel, linked together by a central stalk and a peripheral stalk. During catalysis, ATP synthesis in the catalytic domain of F(1) is coupled via a rotary mechanism of the central stalk subunits to proton translocation. Its function is as follows. Component of the F(0) channel, it forms part of the peripheral stalk, linking F(1) to F(0). The polypeptide is ATP synthase subunit b 1 (Brucella abortus (strain 2308)).